The chain runs to 327 residues: Putative HTH-type transcriptional regulatory protein MM_0444 (327 aa).

An HTH cro/C1-type domain is found at L132 to L190. Residues L143–E162 constitute a DNA-binding region (H-T-H motif). Residues S195–G214 are disordered. Basic and acidic residues predominate over residues K201–G211.

This Methanosarcina mazei (strain ATCC BAA-159 / DSM 3647 / Goe1 / Go1 / JCM 11833 / OCM 88) (Methanosarcina frisia) protein is Putative HTH-type transcriptional regulatory protein MM_0444.